The primary structure comprises 651 residues: Threonine--tRNA ligase (651 aa).

Residues 1-64 (MSSVVHVTLP…EKDCTLQVLT (64 aa)) enclose the TGS domain. The segment at 245 to 535 (DHRRLGPELG…LTEHYAGNFP (291 aa)) is catalytic. Residues cysteine 336, histidine 387, and histidine 512 each contribute to the Zn(2+) site.

The protein belongs to the class-II aminoacyl-tRNA synthetase family. As to quaternary structure, homodimer. The cofactor is Zn(2+).

It is found in the cytoplasm. The catalysed reaction is tRNA(Thr) + L-threonine + ATP = L-threonyl-tRNA(Thr) + AMP + diphosphate + H(+). Its function is as follows. Catalyzes the attachment of threonine to tRNA(Thr) in a two-step reaction: L-threonine is first activated by ATP to form Thr-AMP and then transferred to the acceptor end of tRNA(Thr). Also edits incorrectly charged L-seryl-tRNA(Thr). The polypeptide is Threonine--tRNA ligase (Symbiobacterium thermophilum (strain DSM 24528 / JCM 14929 / IAM 14863 / T)).